The sequence spans 200 residues: Holliday junction branch migration complex subunit RuvA (200 aa).

The segment at Met1–Pro63 is domain I. The tract at residues Asp64–Pro142 is domain II. Positions Pro142–Gly146 are flexible linker. A domain III region spans residues Gly147–Arg200.

The protein belongs to the RuvA family. As to quaternary structure, homotetramer. Forms an RuvA(8)-RuvB(12)-Holliday junction (HJ) complex. HJ DNA is sandwiched between 2 RuvA tetramers; dsDNA enters through RuvA and exits via RuvB. An RuvB hexamer assembles on each DNA strand where it exits the tetramer. Each RuvB hexamer is contacted by two RuvA subunits (via domain III) on 2 adjacent RuvB subunits; this complex drives branch migration. In the full resolvosome a probable DNA-RuvA(4)-RuvB(12)-RuvC(2) complex forms which resolves the HJ.

Its subcellular location is the cytoplasm. Its function is as follows. The RuvA-RuvB-RuvC complex processes Holliday junction (HJ) DNA during genetic recombination and DNA repair, while the RuvA-RuvB complex plays an important role in the rescue of blocked DNA replication forks via replication fork reversal (RFR). RuvA specifically binds to HJ cruciform DNA, conferring on it an open structure. The RuvB hexamer acts as an ATP-dependent pump, pulling dsDNA into and through the RuvAB complex. HJ branch migration allows RuvC to scan DNA until it finds its consensus sequence, where it cleaves and resolves the cruciform DNA. The protein is Holliday junction branch migration complex subunit RuvA of Rhodococcus opacus (strain B4).